We begin with the raw amino-acid sequence, 718 residues long: Acetolactate synthase, mitochondrial (718 aa).

Disordered stretches follow at residues 1-50 (MLTR…APVY) and 72-101 (RKIQSSASTAAASPAVRPQPAQHFQAAPQP). The span at 32 to 45 (RYSNNIHTSSTQNA) shows a compositional bias: polar residues. Positions 76–99 (SSASTAAASPAVRPQPAQHFQAAP) are enriched in low complexity. Glu173 provides a ligand contact to thiamine diphosphate. FAD is bound at residue Arg275. The segment at 296-327 (IPAKSAQPGHSPYLPSNPLNPSSQPSDPLPGD) is disordered. Low complexity predominate over residues 306–325 (SPYLPSNPLNPSSQPSDPLP). Residues 397-418 (HGSAYANFAMQEADVLIALGVR) and 449-468 (EIQPKNINKIVEAQIPVLGD) each bind FAD. The interval 541–621 (QHQMWACQYY…VKVLLFNNEF (81 aa)) is thiamine pyrophosphate binding. Mg(2+)-binding residues include Asp592 and Asn619.

This sequence belongs to the TPP enzyme family. Mg(2+) serves as cofactor. Requires thiamine diphosphate as cofactor.

It is found in the mitochondrion. The catalysed reaction is 2 pyruvate + H(+) = (2S)-2-acetolactate + CO2. The protein operates within amino-acid biosynthesis; L-isoleucine biosynthesis; L-isoleucine from 2-oxobutanoate: step 1/4. It functions in the pathway amino-acid biosynthesis; L-valine biosynthesis; L-valine from pyruvate: step 1/4. In Cryptococcus neoformans var. neoformans serotype D (strain JEC21 / ATCC MYA-565) (Filobasidiella neoformans), this protein is Acetolactate synthase, mitochondrial (ILV2).